The chain runs to 130 residues: Small ribosomal subunit protein uS11 (130 aa).

The protein belongs to the universal ribosomal protein uS11 family. As to quaternary structure, part of the 30S ribosomal subunit.

Located on the platform of the 30S subunit. This Nanoarchaeum equitans (strain Kin4-M) protein is Small ribosomal subunit protein uS11.